The chain runs to 376 residues: Coatomer subunit delta-4 (376 aa).

The tract at residues 65–92 (LNTDTDTFTSRPKGRTSGGTTGAGKGIG) is disordered. The span at 80-92 (TSGGTTGAGKGIG) shows a compositional bias: gly residues. Residues 134–376 (SDPVTVAVEE…RLVADNYQVV (243 aa)) form the MHD domain.

This sequence belongs to the adaptor complexes medium subunit family. Delta-COP subfamily. As to quaternary structure, oligomeric complex that consists of at least the alpha, beta, beta', gamma, delta, epsilon and zeta subunits.

The protein resides in the cytoplasm. Its subcellular location is the golgi apparatus membrane. It localises to the cytoplasmic vesicle. It is found in the COPI-coated vesicle membrane. Functionally, the coatomer is a cytosolic protein complex that binds to dilysine motifs and reversibly associates with Golgi non-clathrin-coated vesicles, which further mediate biosynthetic protein transport from the ER, via the Golgi up to the trans Golgi network. Coatomer complex is required for budding from Golgi membranes, and is essential for the retrograde Golgi-to-ER transport of dilysine-tagged proteins. This Oryza sativa subsp. japonica (Rice) protein is Coatomer subunit delta-4.